Reading from the N-terminus, the 471-residue chain is Tyrosine--tRNA ligase, mitochondrial (471 aa).

Position 71 (Y71) interacts with L-tyrosine. ATP is bound at residue D75. The 'HIGH' region signature appears at P76–H85. The L-tyrosine site is built by D115, Y215, Q219, D222, and Q241. I268 and K278 together coordinate ATP. A 'KMSKS' region motif is present at residues K275–S279. An N6-acetyllysine mark is found at K349 and K361.

This sequence belongs to the class-I aminoacyl-tRNA synthetase family. In terms of assembly, homodimer.

The protein localises to the mitochondrion matrix. The enzyme catalyses tRNA(Tyr) + L-tyrosine + ATP = L-tyrosyl-tRNA(Tyr) + AMP + diphosphate + H(+). In terms of biological role, catalyzes the attachment of tyrosine to tRNA(Tyr) in a two-step reaction: tyrosine is first activated by ATP to form Tyr-AMP and then transferred to the acceptor end of tRNA(Tyr). The chain is Tyrosine--tRNA ligase, mitochondrial (Yars2) from Rattus norvegicus (Rat).